A 295-amino-acid chain; its full sequence is Protein FAM221A (295 aa).

Over residues 272–283 (QERLLKEKEQKR) the composition is skewed to basic and acidic residues. Residues 272 to 295 (QERLLKEKEQKRQKNSKPPTTNRP) are disordered.

It belongs to the FAM221 family.

This is Protein FAM221A (fam221a) from Xenopus tropicalis (Western clawed frog).